Here is a 269-residue protein sequence, read N- to C-terminus: uncharacterized protein (269 aa).

An NADP(+)-binding site is contributed by 15–41; it reads QKSVLITGCSSGIGLESALELKRQGFH. Ser-146 provides a ligand contact to substrate. Tyr-159 acts as the Proton acceptor in catalysis.

This sequence belongs to the short-chain dehydrogenases/reductases (SDR) family.

This is an uncharacterized protein from Escherichia coli O6:H1 (strain CFT073 / ATCC 700928 / UPEC).